We begin with the raw amino-acid sequence, 100 residues long: Urease subunit gamma (100 aa).

It belongs to the urease gamma subunit family. In terms of assembly, heterotrimer of UreA (gamma), UreB (beta) and UreC (alpha) subunits. Three heterotrimers associate to form the active enzyme.

The protein localises to the cytoplasm. The catalysed reaction is urea + 2 H2O + H(+) = hydrogencarbonate + 2 NH4(+). It participates in nitrogen metabolism; urea degradation; CO(2) and NH(3) from urea (urease route): step 1/1. This is Urease subunit gamma from Paraburkholderia phytofirmans (strain DSM 17436 / LMG 22146 / PsJN) (Burkholderia phytofirmans).